The sequence spans 509 residues: MEEFQVYLELDRXRQHDFLYPLIFREYIYALAYDHGLNSSILVQNXGYDNKSSLLIVKRLITRMYQQNHLIISANNSNKNPFWGYNKNLYSQIMSEGLAVSVEIPFSLQLISSLEKAEIIKSYNLRSIHSIFPFFEEKFPYLNYVSDVQIPYPIHLEILIQTLRYWVKDASSFHLLRLFLYEYCNWNSLITPKKRISTFSNSKSNPXFFSKSNPXFFLFLYNFXVCEYXSIFLFLRTKSSYLXLXSFGVLFERIYFYAKIKHFVKVFDKDFPSTLWFFKDPFIHYVXYQGKSILASXNTPFLMKKWKYFLIHLWQXXXXXXXXXXXXXXXXXXXXXXXFLGYFSNVQXNPSVVRSQMLEKSFIMENLMKKLDTIIPIIPLXRSLAKAKXCNVLGHPISKPVWADSSDFDIIDRFLQICRDLSXYYNGSSKKKSLYRIKYILRLSCIKTLARKHKSTVRFFLKRLGSELLEEFFTEEEDLFSLIFSRASSTLQKLDRGRIWYLDIFYFHQ.

It belongs to the intron maturase 2 family. MatK subfamily.

The protein resides in the plastid. It is found in the chloroplast. Its function is as follows. Usually encoded in the trnK tRNA gene intron. Probably assists in splicing its own and other chloroplast group II introns. The protein is Maturase K of Vachellia farnesiana (Sweet acacia).